We begin with the raw amino-acid sequence, 203 residues long: ATP-dependent Clp protease proteolytic subunit 2 (203 aa).

S100 functions as the Nucleophile in the catalytic mechanism. H125 is an active-site residue.

This sequence belongs to the peptidase S14 family. In terms of assembly, fourteen ClpP subunits assemble into 2 heptameric rings which stack back to back to give a disk-like structure with a central cavity, resembling the structure of eukaryotic proteasomes.

Its subcellular location is the cytoplasm. It carries out the reaction Hydrolysis of proteins to small peptides in the presence of ATP and magnesium. alpha-casein is the usual test substrate. In the absence of ATP, only oligopeptides shorter than five residues are hydrolyzed (such as succinyl-Leu-Tyr-|-NHMec, and Leu-Tyr-Leu-|-Tyr-Trp, in which cleavage of the -Tyr-|-Leu- and -Tyr-|-Trp bonds also occurs).. In terms of biological role, cleaves peptides in various proteins in a process that requires ATP hydrolysis. Has a chymotrypsin-like activity. Plays a major role in the degradation of misfolded proteins. This chain is ATP-dependent Clp protease proteolytic subunit 2, found in Nocardia farcinica (strain IFM 10152).